The primary structure comprises 317 residues: Neuroguidin-A (317 aa).

Disordered regions lie at residues 125–170 (ENDP…SKVK) and 280–317 (SALT…RRRH). A compositionally biased stretch (acidic residues) spans 146–157 (DERESDSGEEGA). The span at 297-317 (KKSKKGPKKSKKKKGFSRRRH) shows a compositional bias: basic residues.

It belongs to the SAS10 family. In terms of assembly, part of the small subunit (SSU) processome, composed of more than 70 proteins and the RNA chaperone small nucleolar RNA (snoRNA) U3.

It is found in the nucleus. The protein resides in the nucleolus. Its subcellular location is the chromosome. It localises to the centromere. The protein localises to the cytoplasm. It is found in the cell projection. The protein resides in the axon. Its subcellular location is the dendrite. It localises to the filopodium. In terms of biological role, part of the small subunit (SSU) processome, first precursor of the small eukaryotic ribosomal subunit. During the assembly of the SSU processome in the nucleolus, many ribosome biogenesis factors, an RNA chaperone and ribosomal proteins associate with the nascent pre-rRNA and work in concert to generate RNA folding, modifications, rearrangements and cleavage as well as targeted degradation of pre-ribosomal RNA by the RNA exosome. Its dissociation from the complex determines the transition from state pre-A1 to state pre-A1*. May inhibit mRNA translation. The polypeptide is Neuroguidin-A (ngdn-a) (Xenopus laevis (African clawed frog)).